Consider the following 202-residue polypeptide: TPEQQRYVELFIVVDHGMFMKXXXXXXXXXXXIHQMVNIMKEAYRYLYIDILLTGVEIWSNKDLINVQPAAPQTLDSFGEWRXXXXXXXKSHDNAQLLTSTDFDGPTIGLAYVGSMCDPKRSTAVIQDHSEIDLLVAVTMDHELGHNLGIRHDTGSCSCGGYPCVMSPVISHDISKYFSDCSYIQCWDFIMKENPQCILNKR.

The region spanning 6–200 is the Peptidase M12B domain; sequence RYVELFIVVD…MKENPQCILN (195 aa). Ca(2+) contacts are provided by Glu-9 and Asp-93. 3 cysteine pairs are disulfide-bonded: Cys-117–Cys-197, Cys-157–Cys-181, and Cys-159–Cys-164. His-142 provides a ligand contact to Zn(2+). Residue Glu-143 is part of the active site. Residues His-146 and His-152 each contribute to the Zn(2+) site. Residues Cys-197 and Asn-200 each coordinate Ca(2+).

In terms of assembly, monomer. The cofactor is Zn(2+). Expressed by the venom gland.

The protein resides in the secreted. Its function is as follows. Non-hemorrhagic metalloproteinase that hydrolyzes the alpha chains of fibrinogen and fibrin but has no activity on beta- and gamma-chains. Cleaves X-Leu bonds. Inhibits platelet aggregation induced by the von Willebrand factor (VWF) (IC(50) is 1.4 uM) and type I collagen (IC(50) is 3.2 uM). Acts by cleaving the vWF and its receptor GPIb, and by cleaving the collagen-binding Alpha-2A domain of the collagen receptor alpha-2/beta-1 integrin (ITGA2/ITGB1). Also degrades the extracellular matrix protein fibronectin (FN1), but has no effect on laminin and type I collagen. In Bothrops barnetti (Barnett's lancehead), this protein is Zinc metalloproteinase barnettlysin-1.